The chain runs to 158 residues: MRAPMTLKGVRRLRDELEHLKSVKRPEIINAIAEARAHGDLKENAEYHAAREQQSFIEGRIKQLEGELSHAEVIDVAKLNAGTKIVFGATVTLADLGTDEESRYQIVGDLEADIKQGLVAISSPVARALIGKQEGDTIVIEAPAGRREYEVVAVEYIS.

Residues 45–72 are a coiled coil; that stretch reads AEYHAAREQQSFIEGRIKQLEGELSHAE.

It belongs to the GreA/GreB family.

Its function is as follows. Necessary for efficient RNA polymerase transcription elongation past template-encoded arresting sites. The arresting sites in DNA have the property of trapping a certain fraction of elongating RNA polymerases that pass through, resulting in locked ternary complexes. Cleavage of the nascent transcript by cleavage factors such as GreA or GreB allows the resumption of elongation from the new 3'terminus. GreA releases sequences of 2 to 3 nucleotides. The chain is Transcription elongation factor GreA from Xylella fastidiosa (strain M23).